The sequence spans 85 residues: F(1)-ATPase inhibitor IF(1), mitochondrial (85 aa).

The N-terminal 22 residues, 1–22, are a transit peptide targeting the mitochondrion; sequence MLPRSALARSLQLQRGVAARFY. Positions 41–84 form a coiled coil; sequence KRERATEDFFVRQREKEQLRHLKEQLEKQRKKIDSLENKIDSMT.

Belongs to the ATPase inhibitor family. Monomer and homodimer. The protein aggregates less strongly with increasing pH.

The protein localises to the mitochondrion. Its function is as follows. Endogenous ATPase inhibitor, which inhibits specifically the reverse ATPase reaction of mitochondrial F(1)F(0)-type ATP synthase. It limits ATP depletion when the mitochondrial membrane potential falls below a threshold and the F(1)F(0)-ATP synthase starts hydrolyzing ATP to pump protons out of the mitochondrial matrix. Required to avoid the consumption of cellular ATP when the F(1)F(0)-ATP synthase enzyme acts as an ATP hydrolase. Functions through inserting its N-terminal part into the catalytically active F1-ATPase, thereby blocking its rotational movement and subsequently the ATP hydrolase activity. The protein is F(1)-ATPase inhibitor IF(1), mitochondrial (INH1) of Saccharomyces cerevisiae (strain ATCC 204508 / S288c) (Baker's yeast).